We begin with the raw amino-acid sequence, 367 residues long: Dihydroorotate dehydrogenase (quinone) (367 aa).

Residues 61 to 65 (AGFDK) and Thr-85 each bind FMN. Lys-65 is a substrate binding site. 110 to 114 (NRMGF) is a binding site for substrate. FMN contacts are provided by Asn-138 and Asn-169. Residue Asn-169 participates in substrate binding. Ser-172 serves as the catalytic Nucleophile. Residue Asn-174 participates in substrate binding. 2 residues coordinate FMN: Lys-212 and Thr-240. Residue 241-242 (NT) participates in substrate binding. FMN contacts are provided by residues Gly-263, Gly-292, and 313-314 (YS).

This sequence belongs to the dihydroorotate dehydrogenase family. Type 2 subfamily. As to quaternary structure, monomer. The cofactor is FMN.

The protein localises to the cell membrane. The enzyme catalyses (S)-dihydroorotate + a quinone = orotate + a quinol. It functions in the pathway pyrimidine metabolism; UMP biosynthesis via de novo pathway; orotate from (S)-dihydroorotate (quinone route): step 1/1. Its function is as follows. Catalyzes the conversion of dihydroorotate to orotate with quinone as electron acceptor. The sequence is that of Dihydroorotate dehydrogenase (quinone) from Rhodospirillum rubrum (strain ATCC 11170 / ATH 1.1.1 / DSM 467 / LMG 4362 / NCIMB 8255 / S1).